Reading from the N-terminus, the 431-residue chain is Beta-lactamase hydrolase-like protein (431 aa).

Residues His-212, His-214, and His-286 each coordinate Zn(2+). Asp-309 is a binding site for substrate.

Belongs to the metallo-beta-lactamase superfamily. Zn(2+) is required as a cofactor.

Its function is as follows. Could play a role in cell adherence or biofilm development. This Xylella fastidiosa (strain 9a5c) protein is Beta-lactamase hydrolase-like protein.